Here is a 122-residue protein sequence, read N- to C-terminus: Large ribosomal subunit protein uL14c (122 aa).

It belongs to the universal ribosomal protein uL14 family. Part of the 50S ribosomal subunit.

The protein resides in the plastid. It is found in the chloroplast. In terms of biological role, binds to 23S rRNA. This is Large ribosomal subunit protein uL14c from Coffea arabica (Arabian coffee).